The sequence spans 230 residues: Protein RESPONSE TO ABA AND SALT 1 (230 aa).

In terms of domain architecture, DOG1 spans 7-230 (SQSFTIFVDG…RLRDRDQERA (224 aa)).

Its function is as follows. Negative regulator of salt (NaCl) tolerance probably by enhancing abscisic acid (ABA) sensitivity. The sequence is that of Protein RESPONSE TO ABA AND SALT 1 from Arabidopsis thaliana (Mouse-ear cress).